The following is a 272-amino-acid chain: Indole-3-glycerol phosphate synthase (272 aa).

Belongs to the TrpC family.

It catalyses the reaction 1-(2-carboxyphenylamino)-1-deoxy-D-ribulose 5-phosphate + H(+) = (1S,2R)-1-C-(indol-3-yl)glycerol 3-phosphate + CO2 + H2O. It participates in amino-acid biosynthesis; L-tryptophan biosynthesis; L-tryptophan from chorismate: step 4/5. The polypeptide is Indole-3-glycerol phosphate synthase (Paenarthrobacter aurescens (strain TC1)).